Reading from the N-terminus, the 190-residue chain is Holliday junction branch migration complex subunit RuvA (190 aa).

The tract at residues 1 to 64 (MIGKLTGTLL…EDAQLLYGFG (64 aa)) is domain I. Residues 65–137 (TAQERQAFRE…LKGKLGADVG (73 aa)) form a domain II region. Residues 137–141 (GVRAH) are flexible linker. The domain III stretch occupies residues 142 to 190 (AANDNQADILQALLALGYNDKEAAAALKALPADVGVSEGIKLALKSLSK).

This sequence belongs to the RuvA family. Homotetramer. Forms an RuvA(8)-RuvB(12)-Holliday junction (HJ) complex. HJ DNA is sandwiched between 2 RuvA tetramers; dsDNA enters through RuvA and exits via RuvB. An RuvB hexamer assembles on each DNA strand where it exits the tetramer. Each RuvB hexamer is contacted by two RuvA subunits (via domain III) on 2 adjacent RuvB subunits; this complex drives branch migration. In the full resolvosome a probable DNA-RuvA(4)-RuvB(12)-RuvC(2) complex forms which resolves the HJ.

It localises to the cytoplasm. Its function is as follows. The RuvA-RuvB-RuvC complex processes Holliday junction (HJ) DNA during genetic recombination and DNA repair, while the RuvA-RuvB complex plays an important role in the rescue of blocked DNA replication forks via replication fork reversal (RFR). RuvA specifically binds to HJ cruciform DNA, conferring on it an open structure. The RuvB hexamer acts as an ATP-dependent pump, pulling dsDNA into and through the RuvAB complex. HJ branch migration allows RuvC to scan DNA until it finds its consensus sequence, where it cleaves and resolves the cruciform DNA. The polypeptide is Holliday junction branch migration complex subunit RuvA (Acidovorax sp. (strain JS42)).